The following is a 492-amino-acid chain: NAD(P)H-quinone oxidoreductase subunit 2 A, chloroplastic (492 aa).

13 consecutive transmembrane segments (helical) span residues 6-26 (LLLF…GLIL), 39-59 (TPWL…ALLF), 81-101 (VFQF…VEYI), 106-126 (MAIT…MFLC), 131-151 (LITI…LSGY), 165-185 (YLLM…WLYG), 209-229 (PGIS…LSPA), 277-297 (WHLL…LIAI), 305-325 (MLAY…IVGD), 329-349 (GYAS…GTFA), 377-397 (ALSS…AGFF), 400-420 (LHLF…IGLL), and 466-486 (MIVC…IIAI).

Belongs to the complex I subunit 2 family. As to quaternary structure, NDH is composed of at least 16 different subunits, 5 of which are encoded in the nucleus.

It is found in the plastid. The protein resides in the chloroplast thylakoid membrane. The enzyme catalyses a plastoquinone + NADH + (n+1) H(+)(in) = a plastoquinol + NAD(+) + n H(+)(out). The catalysed reaction is a plastoquinone + NADPH + (n+1) H(+)(in) = a plastoquinol + NADP(+) + n H(+)(out). In terms of biological role, NDH shuttles electrons from NAD(P)H:plastoquinone, via FMN and iron-sulfur (Fe-S) centers, to quinones in the photosynthetic chain and possibly in a chloroplast respiratory chain. The immediate electron acceptor for the enzyme in this species is believed to be plastoquinone. Couples the redox reaction to proton translocation, and thus conserves the redox energy in a proton gradient. The polypeptide is NAD(P)H-quinone oxidoreductase subunit 2 A, chloroplastic (Illicium oligandrum (Star anise)).